The following is a 174-amino-acid chain: Zinc finger AN1 domain-containing stress-associated protein 15 (174 aa).

A disordered region spans residues 1–61; that stretch reads MAQESCDLNK…TPPAAAAAAS (61 aa). Positions 18-41 are enriched in low complexity; sequence PSSSSSPSPSPTTASPSPPTAQMT. Residues 42–54 are compositionally biased toward pro residues; the sequence is EPPPPQSTPPTPP. The AN1-type zinc finger occupies 109-155; that stretch reads VLFVNRCNVCRKRVGLTGFRCRCGELFCPRHRHSETHECSFDYKTAG. Zn(2+) is bound by residues C115, C118, C129, C131, C136, H139, H145, and C147.

May be involved in environmental stress response. The protein is Zinc finger AN1 domain-containing stress-associated protein 15 (SAP15) of Oryza sativa subsp. japonica (Rice).